Reading from the N-terminus, the 374-residue chain is Ribosomal RNA large subunit methyltransferase G (374 aa).

Belongs to the methyltransferase superfamily. RlmG family.

The protein localises to the cytoplasm. The enzyme catalyses guanosine(1835) in 23S rRNA + S-adenosyl-L-methionine = N(2)-methylguanosine(1835) in 23S rRNA + S-adenosyl-L-homocysteine + H(+). In terms of biological role, specifically methylates the guanine in position 1835 (m2G1835) of 23S rRNA. This Pseudomonas aeruginosa (strain ATCC 15692 / DSM 22644 / CIP 104116 / JCM 14847 / LMG 12228 / 1C / PRS 101 / PAO1) protein is Ribosomal RNA large subunit methyltransferase G.